Here is a 430-residue protein sequence, read N- to C-terminus: Serine hydroxymethyltransferase (430 aa).

Residues Leu126 and 130-132 (GHL) contribute to the (6S)-5,6,7,8-tetrahydrofolate site. Residue Lys235 is modified to N6-(pyridoxal phosphate)lysine.

Belongs to the SHMT family. In terms of assembly, homodimer. Pyridoxal 5'-phosphate is required as a cofactor.

It localises to the cytoplasm. The catalysed reaction is (6R)-5,10-methylene-5,6,7,8-tetrahydrofolate + glycine + H2O = (6S)-5,6,7,8-tetrahydrofolate + L-serine. It participates in one-carbon metabolism; tetrahydrofolate interconversion. The protein operates within amino-acid biosynthesis; glycine biosynthesis; glycine from L-serine: step 1/1. Functionally, catalyzes the reversible interconversion of serine and glycine with tetrahydrofolate (THF) serving as the one-carbon carrier. This reaction serves as the major source of one-carbon groups required for the biosynthesis of purines, thymidylate, methionine, and other important biomolecules. Also exhibits THF-independent aldolase activity toward beta-hydroxyamino acids, producing glycine and aldehydes, via a retro-aldol mechanism. This is Serine hydroxymethyltransferase from Leifsonia xyli subsp. xyli (strain CTCB07).